A 138-amino-acid polypeptide reads, in one-letter code: U1 small nuclear ribonucleoprotein C (138 aa).

Residues 4-36 form a Matrin-type zinc finger; sequence YYCDYCDTFLTHDSPSVRKTHNNGRKHKENVRF. The interval 58-138 is disordered; the sequence is QSKPNSQMPP…MGRPPMSLRS (81 aa). The span at 67-109 shows a compositional bias: pro residues; that stretch reads PNAPPGLMPPPGMLPPPGGMPPGRMPPQGLPFPPPGPIPPPPG. Residues 113–138 show a composition bias toward low complexity; it reads MRPPHGQMHMGGPRPQMGRPPMSLRS.

This sequence belongs to the U1 small nuclear ribonucleoprotein C family. In terms of assembly, U1 snRNP is composed of the 7 core Sm proteins B/B', D1, D2, D3, E, F and G that assemble in a heptameric protein ring on the Sm site of the small nuclear RNA to form the core snRNP, and at least 3 U1 snRNP-specific proteins U1-70K, U1-A and U1-C. U1-C interacts with U1 snRNA and the 5' splice-site region of the pre-mRNA.

Its subcellular location is the nucleus. In terms of biological role, component of the spliceosomal U1 snRNP, which is essential for recognition of the pre-mRNA 5' splice-site and the subsequent assembly of the spliceosome. U1-C is directly involved in initial 5' splice-site recognition for both constitutive and regulated alternative splicing. The interaction with the 5' splice-site seems to precede base-pairing between the pre-mRNA and the U1 snRNA. Stimulates commitment or early (E) complex formation by stabilizing the base pairing of the 5' end of the U1 snRNA and the 5' splice-site region. The polypeptide is U1 small nuclear ribonucleoprotein C (Nematostella vectensis (Starlet sea anemone)).